The chain runs to 269 residues: JmjC domain-containing protein 8 (269 aa).

The signal sequence occupies residues 1-24; it reads MAAAGRFGLLLLIVLWTMVTVVLP. N-linked (GlcNAc...) asparagine glycans are attached at residues Asn135, Asn145, and Asn214. A JmjC domain is found at 147 to 269; that stretch reads TEWAPLFQHY…TSVFISTFLG (123 aa).

Oligomer. Dimer. Interacts with PKM; regulates angiogenesis and metabolism. N-glycosylated.

It localises to the endoplasmic reticulum lumen. Its subcellular location is the cytoplasm. Functions as a positive regulator of TNF-induced NF-kappaB signaling. Regulates angiogenesis and cellular metabolism through interaction with PKM. The chain is JmjC domain-containing protein 8 from Rattus norvegicus (Rat).